The following is a 205-amino-acid chain: Bcl2-associated agonist of cell death (205 aa).

Residues 1-139 (MGTPKQPSLA…PFRGRSRSAP (139 aa)) are disordered. Residue serine 67 is modified to Phosphoserine. A compositionally biased stretch (polar residues) spans 85–98 (IVQQQPGQAANNSH). Residue serine 113 is modified to Phosphoserine. Acidic residues predominate over residues 118-128 (TEEDEGMEEEL). Position 129 is a phosphoserine (serine 129). 2 positions are modified to asymmetric dimethylarginine; by PRMT1: arginine 132 and arginine 134. Residue serine 135 is modified to Phosphoserine. Phosphoserine; by PKA, PKB, PAK1, RPS6KA1, RPS6KB1 and PKC/PRKCQ is present on serine 137. Residues 148-162 (YGRELRRMSDEFEGS) carry the BH3 motif. Phosphoserine is present on residues serine 156 and serine 171. Residues 161–180 (GSFKGLPRPKSAGTATQMRQ) are disordered.

The protein belongs to the Bcl-2 family. Forms heterodimers with the anti-apoptotic proteins, Bcl-X(L), Bcl-2 and Bcl-W. Also binds protein S100A10. The Ser-113/Ser-137 phosphorylated form binds 14-3-3 proteins. Interacts with AKT1 and PIM3. Interacts with HIF3A (via C-terminus domain); the interaction reduces the binding between BAD and BAX. Interacts (via BH3 domain) with NOL3 (via CARD domain); preventing the association of BAD with BCL2. Interacts with GIMAP3/IAN4 and GIMAP5/IAN5. Post-translationally, phosphorylated at one or more of Ser-113, Ser-137, Ser-156 and Ser-171 in response to survival stimuli, which blocks its pro-apoptotic activity. Phosphorylation on Ser-137 or Ser-113 promotes heterodimerization with 14-3-3 proteins. This interaction then facilitates the phosphorylation at Ser-156, a site within the BH3 motif, leading to the release of Bcl-X(L) and the promotion of cell survival. Ser-137 is the major site of AKT/PKB phosphorylation, Ser-156 the major site of protein kinase A (CAPK) phosphorylation. In terms of processing, methylation at Arg-132 and Arg-134 by PRMT1 inhibits Akt-mediated phosphorylation at Ser-137. In terms of tissue distribution, expressed in all tissues tested, including brain, liver, spleen and heart. In the brain, restricted to epithelial cells of the choroid plexus. Isoform alpha is the more abundant form.

The protein resides in the mitochondrion outer membrane. It localises to the cytoplasm. Its function is as follows. Promotes cell death. Successfully competes for the binding to Bcl-X(L), Bcl-2 and Bcl-W, thereby affecting the level of heterodimerization of these proteins with BAX. Can reverse the death repressor activity of Bcl-X(L), but not that of Bcl-2. Appears to act as a link between growth factor receptor signaling and the apoptotic pathways. The sequence is that of Bcl2-associated agonist of cell death (Bad) from Rattus norvegicus (Rat).